Consider the following 152-residue polypeptide: MFRGLNPIAVDAKGRIAIPARYREPIESEADGILVVTIDTEERCLLIYTHPQWEQIEQKLENLPSYHPASRRIQRLLIGHATEVELDRSGRILIPPVLREYAGLGSMVMLVGQGKKFELWGKSQWETAREDWLAEELPKGDDLPPELRSLSL.

SpoVT-AbrB domains are found at residues 5 to 52 (LNPI…THPQ) and 81 to 124 (ATEV…GKSQ).

The protein belongs to the MraZ family. Forms oligomers.

It is found in the cytoplasm. It localises to the nucleoid. In Coxiella burnetii (strain Dugway 5J108-111), this protein is Transcriptional regulator MraZ.